The chain runs to 263 residues: 3-methyl-2-oxobutanoate hydroxymethyltransferase (263 aa).

2 residues coordinate Mg(2+): Asp45 and Asp84. 3-methyl-2-oxobutanoate is bound by residues 45–46, Asp84, and Lys112; that span reads DS. Glu114 is a binding site for Mg(2+). Glu180 acts as the Proton acceptor in catalysis.

This sequence belongs to the PanB family. In terms of assembly, homodecamer; pentamer of dimers. It depends on Mg(2+) as a cofactor.

Its subcellular location is the cytoplasm. The catalysed reaction is 3-methyl-2-oxobutanoate + (6R)-5,10-methylene-5,6,7,8-tetrahydrofolate + H2O = 2-dehydropantoate + (6S)-5,6,7,8-tetrahydrofolate. The protein operates within cofactor biosynthesis; (R)-pantothenate biosynthesis; (R)-pantoate from 3-methyl-2-oxobutanoate: step 1/2. In terms of biological role, catalyzes the reversible reaction in which hydroxymethyl group from 5,10-methylenetetrahydrofolate is transferred onto alpha-ketoisovalerate to form ketopantoate. This chain is 3-methyl-2-oxobutanoate hydroxymethyltransferase, found in Salmonella agona (strain SL483).